The primary structure comprises 990 residues: Pentatricopeptide repeat-containing protein At4g33170 (990 aa).

PPR repeat units lie at residues 73-107, 109-139, 144-178, 179-209, 210-244, 279-313, 314-348, 349-379, 380-414, 415-450, 451-477, 481-515, 516-550, 551-581, 582-616, 617-651, 652-682, 683-717, 718-753, and 754-788; these read ERFLINNLISMYSKCGSLTYARRVFDKMPDRDLVS, NSILAAYAQSSECVVENIQQAFLLFRILRQD, SRMTLSPMLKLCLHSGYVWASESFHGYACKIGLDG, DEFVAGALVNIYLKFGKVKEGKVLFEEMPYR, DVVLWNLMLKAYLEMGFKEEAIDLSSAFHSSGLNP, EIIFRNKGLSEYLHSGQYSALLKCFADMVESDVEC, DQVTFILMLATAVKVDSLALGQQVHCMALKLGLDL, MLTVSNSLINMYCKLRKFGFARTVFDNMSER, DLISWNSVIAGIAQNGLEVEAVCLFMQLLRCGLKP, DQYTMTSVLKAASSLPEGLSLSKQVHVHAIKINNVS, DSFVSTALIDAYSRNRCMKEAEILFER, DLVAWNAMMAGYTQSHDGHKTLKLFALMHKQGERS, DDFTLATVFKTCGFLFAINQGKQVHAYAIKSGYDL, DLWVSSGILDMYVKCGDMSAAQFAFDSIPVP, DDVAWTTMISGCIENGEEERAFHVFSQMRLMGVLP, DEFTIATLAKASSCLTALEQGRQIHANALKLNCTN, DPFVGTSLVDMYAKCGSIDDAYCLFKRIEMM, NITAWNAMLVGLAQHGEGKETLQLFKQMKSLGIKP, DKVTFIGVLSACSHSGLVSEAYKHMRSMHGDYGIKP, and EIEHYSCLADALGRAGLVKQAENLIESMSMEASAS. A type E motif region spans residues 789–864; sequence MYRTLLAACR…DPGFSWIEVK (76 aa). The type E(+) motif stretch occupies residues 865-895; the sequence is NKIHIFVVDDRSNRQTELIYRKVKDMIRDIK. Residues 896–990 are type DYW motif; the sequence is QEGYVPETDF…DGICSCGDYW (95 aa).

Belongs to the PPR family. PCMP-H subfamily.

The chain is Pentatricopeptide repeat-containing protein At4g33170 (PCMP-H53) from Arabidopsis thaliana (Mouse-ear cress).